The sequence spans 141 residues: Large ribosomal subunit protein uL11 (141 aa).

Belongs to the universal ribosomal protein uL11 family. Part of the ribosomal stalk of the 50S ribosomal subunit. Interacts with L10 and the large rRNA to form the base of the stalk. L10 forms an elongated spine to which 2 L12 dimers bind in a sequential fashion forming a pentameric L10(L12)2(L12)2 complex. In stalled/isolated 50S subunits interacts with RqcH. Post-translationally, one or more lysine residues are methylated.

Functionally, forms part of the ribosomal stalk which helps the ribosome interact with GTP-bound translation factors. Required to recruit RqcH, which is part of the ribosome quality control system (RQC), to stalled 50S ribosomal subunits. The chain is Large ribosomal subunit protein uL11 from Bacillus subtilis (strain 168).